Here is a 147-residue protein sequence, read N- to C-terminus: Large ribosomal subunit protein uL15 (147 aa).

The protein belongs to the universal ribosomal protein uL15 family. In terms of assembly, part of the 50S ribosomal subunit.

In terms of biological role, binds to the 23S rRNA. This Blochmanniella floridana protein is Large ribosomal subunit protein uL15.